Here is a 547-residue protein sequence, read N- to C-terminus: 4-coumarate-CoA ligase 1 (547 aa).

Residues 190–194 (SSGTT), histidine 238, 310–312 (AAP), 332–333 (QG), threonine 337, aspartate 421, arginine 436, and lysine 527 each bind ATP. An SBD1 region spans residues 263–332 (EIVRLMELVE…EKLPNAKLGQ (70 aa)). The interval 333–400 (GYGMTEAGPV…IRGNQIMKGY (68 aa)) is SBD2.

Belongs to the ATP-dependent AMP-binding enzyme family. In terms of tissue distribution, mostly expressed in stems, and, to a lower extent, in bulbs.

It catalyses the reaction (E)-4-coumarate + ATP + CoA = (E)-4-coumaroyl-CoA + AMP + diphosphate. It participates in phytoalexin biosynthesis; 3,4',5-trihydroxystilbene biosynthesis; 3,4',5-trihydroxystilbene from trans-4-coumarate: step 1/2. Functionally, produces CoA thioesters of a variety of hydroxy- and methoxy-substituted cinnamic acids, which are used to synthesize several phenylpropanoid-derived compounds, including anthocyanins, flavonoids, isoflavonoids, coumarins, lignin, suberin and wall-bound phenolics. The protein is 4-coumarate-CoA ligase 1 of Narcissus pseudonarcissus (Daffodil).